Consider the following 139-residue polypeptide: Protein archease (139 aa).

D12, D138, and I139 together coordinate Ca(2+).

It belongs to the archease family.

Functionally, activates the tRNA-splicing ligase complex by facilitating the enzymatic turnover of catalytic subunit RtcB. Acts by promoting the guanylylation of RtcB, a key intermediate step in tRNA ligation. Can also alter the NTP specificity of RtcB such that ATP, dGTP or ITP is used efficiently. The sequence is that of Protein archease from Saccharolobus islandicus (strain L.S.2.15 / Lassen #1) (Sulfolobus islandicus).